The sequence spans 390 residues: Homeobox protein Meis1 (390 aa).

The MEIS N-terminal domain occupies 108-191; the sequence is GGDVCSSESF…PIDLVIDDRD (84 aa). Over residues 188–202 the composition is skewed to basic and acidic residues; that stretch reads DDRDGGSKSDSEDLT. Residues 188 to 279 form a disordered region; sequence DDRDGGSKSD…KKRNKGRGIF (92 aa). The segment at residues 272–334 is a DNA-binding region (homeobox; TALE-type); it reads RNKGRGIFPK…NARRRIVQPM (63 aa). Residues 299–329 are interaction with DNA; that stretch reads YPSEEQKKQLAQDTGLTILQVNNWFINARRR.

The protein belongs to the TALE/MEIS homeobox family. In terms of assembly, interacts with pbx1 isoform b. As to expression, in the embryo, displays a broad expression pattern with high levels observed in tissues of neural cell fate such as midbrain, hindbrain, dorsal portion of the neural tube, and neural crest-derived branchial arches. Widely expressed in the adult with highest levels in brain and spleen.

It is found in the cytoplasm. It localises to the nucleus. In terms of biological role, induces expression of a number of neural crest marker genes as part of a heterodimer with isoform b of pbx1, to specify neural crest cell fate. Binds to a highly conserved region in the promoter of the neural crest marker gene zic3. The protein is Homeobox protein Meis1 (meis1) of Xenopus laevis (African clawed frog).